A 1185-amino-acid chain; its full sequence is Liprin-alpha-4 (1185 aa).

Coiled coils occupy residues 24–123 (ANFE…CLVS) and 165–499 (DEKV…GRGG). Disordered stretches follow at residues 638 to 709 (SASP…RTLR) and 721 to 757 (EEGK…KSSI). Position 640 is a phosphoserine (serine 640). The span at 645–656 (GRSTPKLTSRSA) shows a compositional bias: polar residues. Phosphoserine is present on serine 681. Basic and acidic residues predominate over residues 684–695 (SREENREDKATI). The segment covering 729–742 (DQGSNPSSSNSSQD) has biased composition (low complexity). 3 consecutive SAM domains span residues 829–895 (WDGP…MVSL), 944–1008 (NHEW…LKRL), and 1032–1101 (WTND…LLAL).

It belongs to the liprin family. Liprin-alpha subfamily. Forms homodimers and heterodimers with liprins-alpha and liprins-beta. Interacts with the second PTPase domain of PTPRD, PTPRF and PTPRS. Interacts with RIMS1 and RIMS2. Interacts with GIT1 and GIT2. Interacts with GRIP1. Interacts with KIF1A. In terms of tissue distribution, expressed only in the heart, brain, and skeletal muscle.

The protein localises to the cytoplasm. It localises to the cell surface. May regulate the disassembly of focal adhesions. May localize receptor-like tyrosine phosphatases type 2A at specific sites on the plasma membrane, possibly regulating their interaction with the extracellular environment and their association with substrates. The polypeptide is Liprin-alpha-4 (PPFIA4) (Homo sapiens (Human)).